Here is a 270-residue protein sequence, read N- to C-terminus: UPF0162 protein VC_2176 (270 aa).

It belongs to the UPF0162 family.

This chain is UPF0162 protein VC_2176, found in Vibrio cholerae serotype O1 (strain ATCC 39315 / El Tor Inaba N16961).